A 372-amino-acid polypeptide reads, in one-letter code: uncharacterized protein (372 aa).

S-adenosyl-L-methionine is bound by residues Asp-202 and 227-229 (GDF).

This sequence belongs to the class I-like SAM-binding methyltransferase superfamily. Cation-independent O-methyltransferase family.

This is an uncharacterized protein from Methanocaldococcus jannaschii (strain ATCC 43067 / DSM 2661 / JAL-1 / JCM 10045 / NBRC 100440) (Methanococcus jannaschii).